A 316-amino-acid chain; its full sequence is Putative S-adenosyl-L-methionine-dependent methyltransferase MAB_4606c (316 aa).

Residues aspartate 137 and 166 to 167 each bind S-adenosyl-L-methionine; that span reads DL.

Belongs to the UPF0677 family.

Functionally, exhibits S-adenosyl-L-methionine-dependent methyltransferase activity. This chain is Putative S-adenosyl-L-methionine-dependent methyltransferase MAB_4606c, found in Mycobacteroides abscessus (strain ATCC 19977 / DSM 44196 / CCUG 20993 / CIP 104536 / JCM 13569 / NCTC 13031 / TMC 1543 / L948) (Mycobacterium abscessus).